A 185-amino-acid chain; its full sequence is GTP cyclohydrolase 1 (185 aa).

Positions 75, 78, and 146 each coordinate Zn(2+).

This sequence belongs to the GTP cyclohydrolase I family. Homomer.

It catalyses the reaction GTP + H2O = 7,8-dihydroneopterin 3'-triphosphate + formate + H(+). Its pathway is cofactor biosynthesis; 7,8-dihydroneopterin triphosphate biosynthesis; 7,8-dihydroneopterin triphosphate from GTP: step 1/1. This chain is GTP cyclohydrolase 1, found in Clostridium kluyveri (strain NBRC 12016).